A 289-amino-acid chain; its full sequence is Serine/threonine-protein phosphatase Pgam5, mitochondrial (289 aa).

Residues 7-23 traverse the membrane as a helical segment; it reads FACGTGAGLAAYYLQRL.

Belongs to the phosphoglycerate mutase family. BPG-dependent PGAM subfamily. As to quaternary structure, interacts with Pk92B/ASK1.

Its subcellular location is the mitochondrion outer membrane. It carries out the reaction O-phospho-L-seryl-[protein] + H2O = L-seryl-[protein] + phosphate. The catalysed reaction is O-phospho-L-threonyl-[protein] + H2O = L-threonyl-[protein] + phosphate. In terms of biological role, displays phosphatase activity for serine/threonine residues, and dephosphorylates and activates Pk92B kinase. Has apparently no phosphoglycerate mutase activity. The chain is Serine/threonine-protein phosphatase Pgam5, mitochondrial from Drosophila sechellia (Fruit fly).